A 401-amino-acid polypeptide reads, in one-letter code: Glucose/mannose transporter GlcP (401 aa).

12 consecutive transmembrane segments (helical) span residues 11–31 (AFFF…PFLL), 43–63 (VIIF…PLMI), 78–98 (IMLV…IIVM), 99–119 (AFLL…FVIA), 132–152 (EVLF…FIDI), 156–176 (FLPY…WLIF), 212–232 (LGFF…FANF), 247–267 (LISV…IGFV), 278–298 (LFSC…SNPI), 306–326 (LIGL…SIII), 336–356 (LFIA…GWSL), and 360–380 (TILL…GISV).

The protein belongs to the major facilitator superfamily.

It is found in the cell membrane. Can transport glucose, mannose, 2-deoxyglucose and methyl alpha-glucoside, but not galactose. This chain is Glucose/mannose transporter GlcP (glcP), found in Bacillus subtilis (strain 168).